Reading from the N-terminus, the 128-residue chain is Nitrogen fixation nifHD region GlnB-like protein 2 (128 aa).

This sequence belongs to the P(II) protein family.

In terms of biological role, could be involved in the regulation of nitrogen fixation. The sequence is that of Nitrogen fixation nifHD region GlnB-like protein 2 (glnBB) from Methanothermococcus thermolithotrophicus (Methanococcus thermolithotrophicus).